A 71-amino-acid chain; its full sequence is UPF0346 protein MGAS2096_Spy0401 (71 aa).

It belongs to the UPF0346 family.

The protein is UPF0346 protein MGAS2096_Spy0401 of Streptococcus pyogenes serotype M12 (strain MGAS2096).